We begin with the raw amino-acid sequence, 417 residues long: Carbon catabolite repressor protein 4 homolog 4 (417 aa).

The residue at position 2 (phenylalanine 2) is an N-acetylserine. Glutamate 143 is a Mg(2+) binding site.

Belongs to the CCR4/nocturin family. As to quaternary structure, component of the CCR4-NOT complex, at least composed of CRR4 and CAF1 proteins. Forms homooligomers. Requires Mg(2+) as cofactor.

The protein localises to the nucleus. Its subcellular location is the cytoplasm. It catalyses the reaction Exonucleolytic cleavage of poly(A) to 5'-AMP.. Its function is as follows. Acts as a catalytic component of the CCR4-NOT core complex, which in the nucleus seems to be a general transcription factor, and in the cytoplasm the major mRNA deadenylase involved in mRNA turnover. Transcriptional regulator of circadian rhythms with poly(A)-degrading activity that affects the expression and rhythmicity of the clock core oscillator genes TOC1 and CCA1. Deadenylation may be a mechanism involved in the regulation of the circadian clock. May play a negative role in response against oxidative stress. Possesses magnesium-dependent poly(A)-specific exoribonuclease activity in vitro and is almost inactive with poly(U), poly(C) and poly(G) as substrates. In Arabidopsis thaliana (Mouse-ear cress), this protein is Carbon catabolite repressor protein 4 homolog 4.